The sequence spans 514 residues: Cytochrome P450 87A3 (514 aa).

A run of 2 helical transmembrane segments spans residues 36-56 and 315-335; these read ASSM…VALL and LMFV…TIGV. Cys-463 serves as a coordination point for heme.

It belongs to the cytochrome P450 family. Requires heme as cofactor. As to expression, expressed in roots and coleoptiles, but not in leaves.

It localises to the cytoplasmic vesicle membrane. This is Cytochrome P450 87A3 (CYP87A3) from Oryza sativa subsp. japonica (Rice).